The primary structure comprises 77 residues: DNA-directed RNA polymerase subunit epsilon (77 aa).

Belongs to the RNA polymerase subunit epsilon family. In terms of assembly, RNAP is composed of a core of 2 alpha, a beta and a beta' subunit. The core is associated with a delta subunit, and at least one of epsilon or omega. When a sigma factor is associated with the core the holoenzyme is formed, which can initiate transcription.

It catalyses the reaction RNA(n) + a ribonucleoside 5'-triphosphate = RNA(n+1) + diphosphate. A non-essential component of RNA polymerase (RNAP). In Lactobacillus delbrueckii subsp. bulgaricus (strain ATCC 11842 / DSM 20081 / BCRC 10696 / JCM 1002 / NBRC 13953 / NCIMB 11778 / NCTC 12712 / WDCM 00102 / Lb 14), this protein is DNA-directed RNA polymerase subunit epsilon.